We begin with the raw amino-acid sequence, 476 residues long: Hyaluronidase-2 (476 aa).

An N-terminal signal peptide occupies residues 1–20 (MWTGLGPAVTLALVLVVAWA). Disulfide bonds link cysteine 47–cysteine 343 and cysteine 214–cysteine 230. Residues asparagine 77 and asparagine 106 are each glycosylated (N-linked (GlcNAc...) asparagine). Glutamate 138 (proton donor) is an active-site residue. Residues asparagine 340 and asparagine 360 are each glycosylated (N-linked (GlcNAc...) asparagine). One can recognise an EGF-like domain in the interval 364-442 (AAQYCSWAQC…YLGWGGEQCQ (79 aa)). 3 disulfides stabilise this stretch: cysteine 368–cysteine 379, cysteine 373–cysteine 430, and cysteine 432–cysteine 441. Glycine 451 carries the GPI-anchor amidated glycine lipid modification. A propeptide spans 452 to 476 (ASGAWAGSHLTGLLAVAVLAFTWTS) (removed in mature form).

Belongs to the glycosyl hydrolase 56 family. In terms of assembly, interacts with MST1R. As to quaternary structure, (Microbial infection) Interacts with Jaagsiekte sheep retrovirus (JSRV) envelope proteins.

The protein localises to the cell membrane. The catalysed reaction is Random hydrolysis of (1-&gt;4)-linkages between N-acetyl-beta-D-glucosamine and D-glucuronate residues in hyaluronate.. Catalyzes hyaluronan degradation into small fragments that are endocytosed and degraded in lysosomes by HYAL1 and exoglycosidases. Essential for the breakdown of extracellular matrix hyaluronan. This Ovis aries (Sheep) protein is Hyaluronidase-2 (HYAL2).